Reading from the N-terminus, the 1327-residue chain is uncharacterized protein (1327 aa).

884 to 885 lines the substrate pocket; sequence WD. Glu-1023 (proton donor) is an active-site residue. A substrate-binding site is contributed by 1143–1144; it reads KQ.

It in the N-terminal section; belongs to the trehalose phosphatase family. In the C-terminal section; belongs to the glycosyl hydrolase 65 family.

This is an uncharacterized protein from Mycobacterium tuberculosis (strain CDC 1551 / Oshkosh).